The sequence spans 40 residues: Photosystem II reaction center protein J (40 aa).

The helical transmembrane segment at 8 to 28 (IPLWLVGTVAGILVIGLIGIF) threads the bilayer.

Belongs to the PsbJ family. In terms of assembly, PSII is composed of 1 copy each of membrane proteins PsbA, PsbB, PsbC, PsbD, PsbE, PsbF, PsbH, PsbI, PsbJ, PsbK, PsbL, PsbM, PsbT, PsbX, PsbY, PsbZ, Psb30/Ycf12, at least 3 peripheral proteins of the oxygen-evolving complex and a large number of cofactors. It forms dimeric complexes.

Its subcellular location is the plastid. It localises to the chloroplast thylakoid membrane. One of the components of the core complex of photosystem II (PSII). PSII is a light-driven water:plastoquinone oxidoreductase that uses light energy to abstract electrons from H(2)O, generating O(2) and a proton gradient subsequently used for ATP formation. It consists of a core antenna complex that captures photons, and an electron transfer chain that converts photonic excitation into a charge separation. This is Photosystem II reaction center protein J from Gnetum parvifolium (Small-leaved jointfir).